Here is a 297-residue protein sequence, read N- to C-terminus: uncharacterized protein (297 aa).

A disordered region spans residues 1 to 44 (MQKSKSIFIPKAFAPQQQAQAPPSKLDNKDPSVEGEGASKPKDD). Residues 10–23 (PKAFAPQQQAQAPP) show a composition bias toward low complexity. The span at 26 to 44 (LDNKDPSVEGEGASKPKDD) shows a compositional bias: basic and acidic residues.

This is an uncharacterized protein from Invertebrate iridescent virus 3 (IIV-3).